A 255-amino-acid polypeptide reads, in one-letter code: MDNLRRKEKILIADDESSIRRILETRLSIIGYEVLTAPDGRSALFLFHKEHPNLVVLDVMMPKIDGYGVCQEIRKESDIPIIMLTALGDVTDRITGLELGADDYVVKPFSPKELEARIRCVLRRVDKFYFSNTFTNSGIINIGFLKIDINRKQVYKNEERIRLTGMEFNLLELLISNSGEPLSRTTILEEVWGYTPERHLDTRVVDVHISRLRAKLEDDPSNPELILTSRGTGYLFQRIMEINKNYNPIIQIQKI.

Positions 9–122 (KILIADDESS…ELEARIRCVL (114 aa)) constitute a Response regulatory domain. Position 58 is a 4-aspartylphosphate (Asp58). The H-T-H motif DNA-binding region spans 78–96 (DIPIIMLTALGDVTDRITG). The segment at residues 137 to 238 (SGIINIGFLK…SRGTGYLFQR (102 aa)) is a DNA-binding region (ompR/PhoB-type).

The protein localises to the plastid. It localises to the chloroplast. Its function is as follows. Probable promoter-specific protein mediating the interaction between DNA and RNA polymerase. In Galdieria sulphuraria (Red alga), this protein is Probable transcriptional regulator ycf27 (ycf27).